The primary structure comprises 87 residues: Phosphoribosyl-ATP pyrophosphatase (87 aa).

The protein belongs to the PRA-PH family.

It localises to the cytoplasm. It catalyses the reaction 1-(5-phospho-beta-D-ribosyl)-ATP + H2O = 1-(5-phospho-beta-D-ribosyl)-5'-AMP + diphosphate + H(+). It participates in amino-acid biosynthesis; L-histidine biosynthesis; L-histidine from 5-phospho-alpha-D-ribose 1-diphosphate: step 2/9. This chain is Phosphoribosyl-ATP pyrophosphatase, found in Paenarthrobacter aurescens (strain TC1).